Consider the following 326-residue polypeptide: Beta-ketoacyl-[acyl-carrier-protein] synthase III (326 aa).

Residues C120 and H253 contribute to the active site. The interval 254–258 (QANIR) is ACP-binding. N283 is a catalytic residue.

It belongs to the thiolase-like superfamily. FabH family. Homodimer.

The protein localises to the cytoplasm. The enzyme catalyses malonyl-[ACP] + acetyl-CoA + H(+) = 3-oxobutanoyl-[ACP] + CO2 + CoA. Its pathway is lipid metabolism; fatty acid biosynthesis. Its function is as follows. Catalyzes the condensation reaction of fatty acid synthesis by the addition to an acyl acceptor of two carbons from malonyl-ACP. Catalyzes the first condensation reaction which initiates fatty acid synthesis and may therefore play a role in governing the total rate of fatty acid production. Possesses both acetoacetyl-ACP synthase and acetyl transacylase activities. Its substrate specificity determines the biosynthesis of branched-chain and/or straight-chain of fatty acids. The protein is Beta-ketoacyl-[acyl-carrier-protein] synthase III of Ralstonia nicotianae (strain ATCC BAA-1114 / GMI1000) (Ralstonia solanacearum).